A 300-amino-acid polypeptide reads, in one-letter code: Centromere protein O (300 aa).

2 coiled-coil regions span residues leucine 18–glutamine 42 and asparagine 83–histidine 109. A Phosphoserine modification is found at serine 35.

Belongs to the CENP-O/MCM21 family. Component of the CENPA-CAD complex, composed of CENPI, CENPK, CENPL, CENPO, CENPP, CENPQ, CENPR and CENPS. The CENPA-CAD complex interacts with the CENPA-NAC complex, at least composed of CENPA, CENPC, CENPH, CENPM, CENPN, CENPT and CENPU.

It is found in the nucleus. The protein resides in the chromosome. Its subcellular location is the centromere. It localises to the kinetochore. Component of the CENPA-CAD (nucleosome distal) complex, a complex recruited to centromeres which is involved in assembly of kinetochore proteins, mitotic progression and chromosome segregation. May be involved in incorporation of newly synthesized CENPA into centromeres via its interaction with the CENPA-NAC complex. Modulates the kinetochore-bound levels of NDC80 complex. In Homo sapiens (Human), this protein is Centromere protein O (CENPO).